The sequence spans 231 residues: Large ribosomal subunit protein uL1 (231 aa).

It belongs to the universal ribosomal protein uL1 family. As to quaternary structure, part of the 50S ribosomal subunit.

Its function is as follows. Binds directly to 23S rRNA. The L1 stalk is quite mobile in the ribosome, and is involved in E site tRNA release. Functionally, protein L1 is also a translational repressor protein, it controls the translation of the L11 operon by binding to its mRNA. This chain is Large ribosomal subunit protein uL1, found in Pseudomonas syringae pv. syringae (strain B728a).